The following is a 148-amino-acid chain: Protein H2A.6 (148 aa).

The tract at residues 120–148 (GAAEKESTKSPKKKAATKSPKKKTAATKE) is disordered. Short sequence motifs (SPKK motif) lie at residues 129-132 (SPKK) and 138-141 (SPKK). Residues 129-148 (SPKKKAATKSPKKKTAATKE) show a composition bias toward basic residues.

The protein belongs to the histone H2A family. In terms of assembly, the nucleosome is a histone octamer containing two molecules each of H2A, H2B, H3 and H4 assembled in one H3-H4 heterotetramer and two H2A-H2B heterodimers. The octamer wraps approximately 147 bp of DNA. In terms of tissue distribution, abundant in meristematic tissues.

Its subcellular location is the nucleus. It localises to the chromosome. Core component of nucleosome. Nucleosomes wrap and compact DNA into chromatin, limiting DNA accessibility to the cellular machineries which require DNA as a template. Histones thereby play a central role in transcription regulation, DNA repair, DNA replication and chromosomal stability. DNA accessibility is regulated via a complex set of post-translational modifications of histones, also called histone code, and nucleosome remodeling. The protein is Protein H2A.6 (H2A-3) of Triticum aestivum (Wheat).